Consider the following 501-residue polypeptide: Probable cytosol aminopeptidase (501 aa).

Residues K257 and D262 each coordinate Mn(2+). The active site involves K269. Mn(2+)-binding residues include D281, D341, and E343. R345 is an active-site residue.

Belongs to the peptidase M17 family. Mn(2+) is required as a cofactor.

It localises to the cytoplasm. It carries out the reaction Release of an N-terminal amino acid, Xaa-|-Yaa-, in which Xaa is preferably Leu, but may be other amino acids including Pro although not Arg or Lys, and Yaa may be Pro. Amino acid amides and methyl esters are also readily hydrolyzed, but rates on arylamides are exceedingly low.. It catalyses the reaction Release of an N-terminal amino acid, preferentially leucine, but not glutamic or aspartic acids.. In terms of biological role, presumably involved in the processing and regular turnover of intracellular proteins. Catalyzes the removal of unsubstituted N-terminal amino acids from various peptides. The sequence is that of Probable cytosol aminopeptidase from Synechococcus sp. (strain RCC307).